The primary structure comprises 769 residues: Elongation factor G, mitochondrial (769 aa).

A mitochondrion-targeting transit peptide spans 1-42 (MSKFLRGISSISSASLKARASNFGVFHGVCSARNLHQSRLCL). The 283-residue stretch at 74-356 (TRLRNIGVSA…AVVDYLPQPN (283 aa)) folds into the tr-type G domain. Residues 83 to 90 (AHIDSGKT), 154 to 158 (DTPGH), and 208 to 211 (NKMD) contribute to the GTP site.

It belongs to the TRAFAC class translation factor GTPase superfamily. Classic translation factor GTPase family. EF-G/EF-2 subfamily.

Its subcellular location is the mitochondrion. Its pathway is protein biosynthesis; polypeptide chain elongation. Functionally, mitochondrial GTPase that catalyzes the GTP-dependent ribosomal translocation step during translation elongation. During this step, the ribosome changes from the pre-translocational (PRE) to the post-translocational (POST) state as the newly formed A-site-bound peptidyl-tRNA and P-site-bound deacylated tRNA move to the P and E sites, respectively. Catalyzes the coordinated movement of the two tRNA molecules, the mRNA and conformational changes in the ribosome. This is Elongation factor G, mitochondrial from Debaryomyces hansenii (strain ATCC 36239 / CBS 767 / BCRC 21394 / JCM 1990 / NBRC 0083 / IGC 2968) (Yeast).